The sequence spans 174 residues: MLSVEKFRVGERVVWIGVIFSGRVQGIAFAFDRGTLMKRIHDLAEHLGKRGVSISLDVQPSDYPEKVFKVLIGELDNASFLRELSFEGVTPFEKKVYEWLTKNVKRGSVITYGDLAKALNTSPRAVGGAMKRNPYPIVVPCHRVVAHDGIGYYSSGIEEKKFLLEIEGVKEWTS.

Catalysis depends on cysteine 141, which acts as the Nucleophile; methyl group acceptor.

Belongs to the MGMT family.

The protein resides in the cytoplasm. The catalysed reaction is a 6-O-methyl-2'-deoxyguanosine in DNA + L-cysteinyl-[protein] = S-methyl-L-cysteinyl-[protein] + a 2'-deoxyguanosine in DNA. It carries out the reaction a 4-O-methyl-thymidine in DNA + L-cysteinyl-[protein] = a thymidine in DNA + S-methyl-L-cysteinyl-[protein]. Involved in the cellular defense against the biological effects of O6-methylguanine (O6-MeG) and O4-methylthymine (O4-MeT) in DNA. Repairs the methylated nucleobase in DNA by stoichiometrically transferring the methyl group to a cysteine residue in the enzyme. This is a suicide reaction: the enzyme is irreversibly inactivated. The chain is Methylated-DNA--protein-cysteine methyltransferase from Thermococcus kodakarensis (strain ATCC BAA-918 / JCM 12380 / KOD1) (Pyrococcus kodakaraensis (strain KOD1)).